The primary structure comprises 490 residues: Aspartyl/glutamyl-tRNA(Asn/Gln) amidotransferase subunit B (490 aa).

The protein belongs to the GatB/GatE family. GatB subfamily. Heterotrimer of A, B and C subunits.

It catalyses the reaction L-glutamyl-tRNA(Gln) + L-glutamine + ATP + H2O = L-glutaminyl-tRNA(Gln) + L-glutamate + ADP + phosphate + H(+). It carries out the reaction L-aspartyl-tRNA(Asn) + L-glutamine + ATP + H2O = L-asparaginyl-tRNA(Asn) + L-glutamate + ADP + phosphate + 2 H(+). In terms of biological role, allows the formation of correctly charged Asn-tRNA(Asn) or Gln-tRNA(Gln) through the transamidation of misacylated Asp-tRNA(Asn) or Glu-tRNA(Gln) in organisms which lack either or both of asparaginyl-tRNA or glutaminyl-tRNA synthetases. The reaction takes place in the presence of glutamine and ATP through an activated phospho-Asp-tRNA(Asn) or phospho-Glu-tRNA(Gln). This is Aspartyl/glutamyl-tRNA(Asn/Gln) amidotransferase subunit B from Burkholderia mallei (strain NCTC 10247).